The sequence spans 547 residues: Chaperonin GroEL 1 (547 aa).

ATP contacts are provided by residues 30–33 (TLGP), Lys-51, 87–91 (DGTTT), Gly-415, and Asp-496.

The protein belongs to the chaperonin (HSP60) family. In terms of assembly, forms a cylinder of 14 subunits composed of two heptameric rings stacked back-to-back. Interacts with the co-chaperonin GroES.

The protein resides in the cytoplasm. The catalysed reaction is ATP + H2O + a folded polypeptide = ADP + phosphate + an unfolded polypeptide.. Together with its co-chaperonin GroES, plays an essential role in assisting protein folding. The GroEL-GroES system forms a nano-cage that allows encapsulation of the non-native substrate proteins and provides a physical environment optimized to promote and accelerate protein folding. The polypeptide is Chaperonin GroEL 1 (Rhodopseudomonas palustris (strain BisB18)).